Consider the following 580-residue polypeptide: F-box only protein 24 (580 aa).

Residues 36-82 (PISIQLFPPELVEHIISFLPVRDLVALGQTCRYFHEVCDGEGVWRRI) form the F-box domain. The RCC1 repeat unit spans residues 376 to 425 (GRIFMQGNNRYGQLGTGDKMDRGEPTQVCYLQRPITLWCGLNHSLVLSQS).

In terms of assembly, directly interacts with SKP1 and CUL1.

Functionally, substrate-recognition component of the SCF (SKP1-CUL1-F-box protein)-type E3 ubiquitin ligase complex. The sequence is that of F-box only protein 24 (FBXO24) from Homo sapiens (Human).